A 315-amino-acid chain; its full sequence is Olfactory receptor 3A1 (315 aa).

At 1-28 (MQPESGANGTVIAEFILLGLLEAPGLQP) the chain is on the extracellular side. N8 is a glycosylation site (N-linked (GlcNAc...) asparagine). A helical membrane pass occupies residues 29-52 (VVFVLFLFAYLVTVGGNLSILAAV). Residues 53-60 (LVEPKLHS) lie on the Cytoplasmic side of the membrane. The helical transmembrane segment at 61–82 (PMYFFLGNLSVLDVGCISVTVP) threads the bilayer. The Extracellular portion of the chain corresponds to 83-103 (SMLSRLLSRKRAVPCGACLTQ). A disulfide bridge connects residues C100 and C192. The chain crosses the membrane as a helical span at residues 104–123 (LFFFHLFVGVDCFLLTAMAY). Topologically, residues 124-143 (DRFLAICRPLTYSTRMSQTV) are cytoplasmic. The helical transmembrane segment at 144 to 161 (QRMLVAASWACAFTNALT) threads the bilayer. Topologically, residues 162–199 (HTVAMSTLNFCGPNEVNHFYCDLPQLFQLSCSSTQLNE) are extracellular. A helical transmembrane segment spans residues 200-223 (LLLFAVGFIMAGTPMALIVISYIH). The Cytoplasmic segment spans residues 224-240 (VAAAVLRIRSVEGRKKA). Residues 241-264 (FSTCGSHLTVVAMFYGSGIFNYMR) form a helical membrane-spanning segment. Residues 265-275 (LGSTKLSDKDK) are Extracellular-facing. The chain crosses the membrane as a helical span at residues 276–295 (AVGIFNTVINPMVNPIIYRF). At 296–315 (RNPEVQSAIWRMLTGRRSLA) the chain is on the cytoplasmic side.

This sequence belongs to the G-protein coupled receptor 1 family.

The protein localises to the cell membrane. Its function is as follows. Odorant receptor. The protein is Olfactory receptor 3A1 (OR3A1) of Pan troglodytes (Chimpanzee).